We begin with the raw amino-acid sequence, 319 residues long: DNA-directed RNA polymerase subunit alpha (319 aa).

The segment at 1–227 (MKEFIFPMKI…KHMNMLTNIS (227 aa)) is alpha N-terminal domain (alpha-NTD). The interval 242–319 (LMEKLTFSIE…NIGEQRSSEV (78 aa)) is alpha C-terminal domain (alpha-CTD).

Belongs to the RNA polymerase alpha chain family. As to quaternary structure, homodimer. The RNAP catalytic core consists of 2 alpha, 1 beta, 1 beta' and 1 omega subunit. When a sigma factor is associated with the core the holoenzyme is formed, which can initiate transcription.

It catalyses the reaction RNA(n) + a ribonucleoside 5'-triphosphate = RNA(n+1) + diphosphate. Functionally, DNA-dependent RNA polymerase catalyzes the transcription of DNA into RNA using the four ribonucleoside triphosphates as substrates. This is DNA-directed RNA polymerase subunit alpha from Hydrogenobaculum sp. (strain Y04AAS1).